The following is a 488-amino-acid chain: Probable cytosol aminopeptidase (488 aa).

Residues Lys254 and Asp259 each contribute to the Mn(2+) site. Lys266 is a catalytic residue. Mn(2+) contacts are provided by Asp277, Asp336, and Glu338. Residue Arg340 is part of the active site.

Belongs to the peptidase M17 family. The cofactor is Mn(2+).

The protein localises to the cytoplasm. The catalysed reaction is Release of an N-terminal amino acid, Xaa-|-Yaa-, in which Xaa is preferably Leu, but may be other amino acids including Pro although not Arg or Lys, and Yaa may be Pro. Amino acid amides and methyl esters are also readily hydrolyzed, but rates on arylamides are exceedingly low.. It catalyses the reaction Release of an N-terminal amino acid, preferentially leucine, but not glutamic or aspartic acids.. In terms of biological role, presumably involved in the processing and regular turnover of intracellular proteins. Catalyzes the removal of unsubstituted N-terminal amino acids from various peptides. The polypeptide is Probable cytosol aminopeptidase (Roseiflexus castenholzii (strain DSM 13941 / HLO8)).